The following is a 498-amino-acid chain: Glycerol kinase (498 aa).

An ADP-binding site is contributed by threonine 12. ATP-binding residues include threonine 12, threonine 13, and serine 14. Threonine 12 serves as a coordination point for sn-glycerol 3-phosphate. Arginine 16 serves as a coordination point for ADP. Arginine 82, glutamate 83, tyrosine 134, and aspartate 244 together coordinate sn-glycerol 3-phosphate. Residues arginine 82, glutamate 83, tyrosine 134, aspartate 244, and glutamine 245 each contribute to the glycerol site. The ADP site is built by threonine 266 and glycine 310. Residues threonine 266, glycine 310, glutamine 314, and glycine 411 each coordinate ATP. Residues glycine 411 and asparagine 415 each coordinate ADP.

It belongs to the FGGY kinase family.

The enzyme catalyses glycerol + ATP = sn-glycerol 3-phosphate + ADP + H(+). Its pathway is polyol metabolism; glycerol degradation via glycerol kinase pathway; sn-glycerol 3-phosphate from glycerol: step 1/1. Inhibited by fructose 1,6-bisphosphate (FBP). Key enzyme in the regulation of glycerol uptake and metabolism. Catalyzes the phosphorylation of glycerol to yield sn-glycerol 3-phosphate. This is Glycerol kinase from Roseiflexus sp. (strain RS-1).